The primary structure comprises 501 residues: MNYFPWLTIIVVLPISAGSLILFLPYKGNKTIRWYTICICILELLITTYAFCYHFQLDDPLIQLEEDYKWVNFFDFHWRLGIDGLSIGPILLTGFITTLATLAARPVTRDSRLLHLLMLAMYSGQIGSFSSRDLLLFFIMWELELIPVYLLLSMWGGGKKRLYSATKFILYTAGGSIFLLMGVLGMDLYGSNEPTLNFETLANQSYPVALEILFYFGFIIAFAVKSPIIPLHTWLPDTHGEAHYSTCMLLAGILLKMGAYGLIRINMELLPHAHSIFSPWLVIVGTMQIIYAASTSPGQRNLKKRIAYSSVSHMGFIIIGIGSITDAGLNGAILQIISHGFIGAALFFLAGTSYDRIRLIYLDEMGGIAIQMPKIFTMFSSFSMASLALPGMSGFVAELIVFFGIITSQKYFLMPKILITFVMAIGMILTPIYSLSMSRQMFYGYKLFNTTNSFFSDSGPRELFVSISIFLPVIGIGIYPDFVLSLSVDKVEAILSNYFYR.

Helical transmembrane passes span 4–24 (FPWL…ILFL), 35–55 (YTIC…CYHF), 84–104 (GLSI…TLAA), 111–129 (SRLL…IGSF), 134–154 (LLLF…LLSM), 168–188 (FILY…GMDL), 209–229 (ALEI…SPII), 243–263 (HYST…YGLI), 273–293 (AHSI…IYAA), 306–326 (IAYS…SITD), 331–351 (GAIL…FLAG), 387–407 (LALP…GIIT), 417–437 (ILIT…SLSM), and 463–483 (LFVS…PDFV).

Belongs to the complex I subunit 4 family.

The protein resides in the plastid. The protein localises to the chloroplast thylakoid membrane. The catalysed reaction is a plastoquinone + NADH + (n+1) H(+)(in) = a plastoquinol + NAD(+) + n H(+)(out). It catalyses the reaction a plastoquinone + NADPH + (n+1) H(+)(in) = a plastoquinol + NADP(+) + n H(+)(out). The sequence is that of NAD(P)H-quinone oxidoreductase chain 4, chloroplastic from Buxus microphylla (Littleleaf boxwood).